Here is a 467-residue protein sequence, read N- to C-terminus: Phosphomethylpyrimidine synthase (467 aa).

Residues asparagine 80, methionine 109, tyrosine 139, histidine 175, 195–197, 236–239, and glutamate 275 contribute to the substrate site; these read SRG and DSLR. Histidine 279 provides a ligand contact to Zn(2+). Residue tyrosine 302 coordinates substrate. Histidine 343 serves as a coordination point for Zn(2+). Residues cysteine 423, cysteine 426, and cysteine 431 each coordinate [4Fe-4S] cluster.

This sequence belongs to the ThiC family. [4Fe-4S] cluster is required as a cofactor.

It carries out the reaction 5-amino-1-(5-phospho-beta-D-ribosyl)imidazole + S-adenosyl-L-methionine = 4-amino-2-methyl-5-(phosphooxymethyl)pyrimidine + CO + 5'-deoxyadenosine + formate + L-methionine + 3 H(+). The protein operates within cofactor biosynthesis; thiamine diphosphate biosynthesis. Functionally, catalyzes the synthesis of the hydroxymethylpyrimidine phosphate (HMP-P) moiety of thiamine from aminoimidazole ribotide (AIR) in a radical S-adenosyl-L-methionine (SAM)-dependent reaction. This chain is Phosphomethylpyrimidine synthase, found in Synechococcus sp. (strain WH7803).